Reading from the N-terminus, the 178-residue chain is MGVLDIAKGMGVTLGKLFQKPLTVSYPEQRATLQPRFRGRHVLTRHPDTGLEKCIGCSLCAAACPAYAIYVEAAENDPRDPVSPGERYAKVYEINMLRCIFCGLCEEACPTGAVVLGNEFEMADYRSRDFVYGKEDMLVGVTGSRPQRREALSAGRPVRLGFQVEGGPRAELEGVEYP.

4Fe-4S ferredoxin-type domains lie at 45-74 (RHPD…VEAA) and 90-119 (KVYE…LGNE). 8 residues coordinate [4Fe-4S] cluster: Cys54, Cys57, Cys60, Cys64, Cys99, Cys102, Cys105, and Cys109.

The protein belongs to the complex I 23 kDa subunit family. In terms of assembly, NDH-1 is composed of 15 different subunits. Subunits NuoA, H, J, K, L, M, N constitute the membrane sector of the complex. [4Fe-4S] cluster is required as a cofactor.

The protein resides in the cell membrane. The enzyme catalyses a quinone + NADH + 5 H(+)(in) = a quinol + NAD(+) + 4 H(+)(out). Functionally, NDH-1 shuttles electrons from NADH, via FMN and iron-sulfur (Fe-S) centers, to quinones in the respiratory chain. The immediate electron acceptor for the enzyme in this species is believed to be ubiquinone. Couples the redox reaction to proton translocation (for every two electrons transferred, four hydrogen ions are translocated across the cytoplasmic membrane), and thus conserves the redox energy in a proton gradient. This Deinococcus radiodurans (strain ATCC 13939 / DSM 20539 / JCM 16871 / CCUG 27074 / LMG 4051 / NBRC 15346 / NCIMB 9279 / VKM B-1422 / R1) protein is NADH-quinone oxidoreductase subunit I.